We begin with the raw amino-acid sequence, 129 residues long: Follitropin subunit beta (129 aa).

A signal peptide spans 1–18 (MKSIQFCFFFCCWKAICC). Disulfide bonds link cysteine 21-cysteine 69, cysteine 35-cysteine 84, cysteine 38-cysteine 122, cysteine 46-cysteine 100, cysteine 50-cysteine 102, and cysteine 105-cysteine 112. Asparagine 25 and asparagine 42 each carry an N-linked (GlcNAc...) asparagine glycan.

It belongs to the glycoprotein hormones subunit beta family. As to quaternary structure, heterodimer. The active follitropin is a heterodimer composed of an alpha chain/CGA shared with other hormones and a unique beta chain/FSHB shown here.

It localises to the secreted. Functionally, together with the alpha chain CGA constitutes follitropin, the follicle-stimulating hormone, and provides its biological specificity to the hormone heterodimer. Binds FSHR, a G protein-coupled receptor, on target cells to activate downstream signaling pathways. Follitropin is involved in follicle development and spermatogenesis in reproductive organs. In Cavia porcellus (Guinea pig), this protein is Follitropin subunit beta (FSHB).